Consider the following 536-residue polypeptide: Chaperonin GroEL 2 (536 aa).

Residues 29–32 (TLGP), K50, G416, and D497 each bind ATP.

It belongs to the chaperonin (HSP60) family. Forms a cylinder of 14 subunits composed of two heptameric rings stacked back-to-back. Interacts with the co-chaperonin GroES.

Its subcellular location is the cytoplasm. It carries out the reaction ATP + H2O + a folded polypeptide = ADP + phosphate + an unfolded polypeptide.. Its function is as follows. Together with its co-chaperonin GroES, plays an essential role in assisting protein folding. The GroEL-GroES system forms a nano-cage that allows encapsulation of the non-native substrate proteins and provides a physical environment optimized to promote and accelerate protein folding. The polypeptide is Chaperonin GroEL 2 (Chlamydia caviae (strain ATCC VR-813 / DSM 19441 / 03DC25 / GPIC) (Chlamydophila caviae)).